A 1433-amino-acid polypeptide reads, in one-letter code: CAP-Gly domain-containing linker protein 1 (1433 aa).

The disordered stretch occupies residues 1–51 (MSMLKPSGLKAPSKTIKHGSTLLKAPASVATAPAEKAPSSEKSSSTTTADA). Positions 32 to 49 (APAEKAPSSEKSSSTTTA) are enriched in low complexity. The CAP-Gly 1 domain maps to 79-121 (GETQFAPGQWAGIVLDEPIGKNDGSVAGVRYFQCEPLRGIFTR). The interval 133–208 (DEANGTQTAH…VSNLSEAGSL (76 aa)) is disordered. Residues 140-168 (TAHASRATSPTSTSTASAVSASPAALLPS) are compositionally biased toward low complexity. Over residues 184–204 (TPSQFSNLSKTASGSVSNLSE) the composition is skewed to polar residues. In terms of domain architecture, CAP-Gly 2 spans 235–277 (GETDFAKGEWCGVELDEPLGKNDGAVAGTRYFQCQPRYGLFAP). The span at 319–333 (SLSSVASSVSSKPSR) shows a compositional bias: low complexity. The segment at 319–338 (SLSSVASSVSSKPSRTGLLT) is disordered. Positions 351–1353 (TTALQEALKE…CEAALNGNEE (1003 aa)) form a coiled coil. A CCHC-type zinc finger spans residues 1412–1429 (PYCDTCEMFGHWTADCND).

The protein localises to the cytoplasm. It is found in the cytoskeleton. The protein resides in the cytoplasmic vesicle membrane. Its subcellular location is the cell projection. It localises to the ruffle. Binds to the plus end of microtubules and regulates the dynamics of the microtubule cytoskeleton. Promotes microtubule growth and microtubule bundling. Links cytoplasmic vesicles to microtubules and thereby plays an important role in intracellular vesicle trafficking. Plays a role macropinocytosis and endosome trafficking. The sequence is that of CAP-Gly domain-containing linker protein 1 (CLIP1) from Gallus gallus (Chicken).